The sequence spans 97 residues: Aspartyl/glutamyl-tRNA(Asn/Gln) amidotransferase subunit C (97 aa).

The disordered stretch occupies residues 58-78; that stretch reads LPQGRLRKDTPRDPLDRENAL. A compositionally biased stretch (basic and acidic residues) spans 63–77; the sequence is LRKDTPRDPLDRENA.

This sequence belongs to the GatC family. Heterotrimer of A, B and C subunits.

The catalysed reaction is L-glutamyl-tRNA(Gln) + L-glutamine + ATP + H2O = L-glutaminyl-tRNA(Gln) + L-glutamate + ADP + phosphate + H(+). It catalyses the reaction L-aspartyl-tRNA(Asn) + L-glutamine + ATP + H2O = L-asparaginyl-tRNA(Asn) + L-glutamate + ADP + phosphate + 2 H(+). Its function is as follows. Allows the formation of correctly charged Asn-tRNA(Asn) or Gln-tRNA(Gln) through the transamidation of misacylated Asp-tRNA(Asn) or Glu-tRNA(Gln) in organisms which lack either or both of asparaginyl-tRNA or glutaminyl-tRNA synthetases. The reaction takes place in the presence of glutamine and ATP through an activated phospho-Asp-tRNA(Asn) or phospho-Glu-tRNA(Gln). The protein is Aspartyl/glutamyl-tRNA(Asn/Gln) amidotransferase subunit C of Saccharolobus islandicus (strain Y.N.15.51 / Yellowstone #2) (Sulfolobus islandicus).